Consider the following 659-residue polypeptide: 4-alpha-glucanotransferase (659 aa).

The active-site Nucleophile is the Glu123. The Proton donor role is filled by Asp214.

This sequence belongs to the glycosyl hydrolase 57 family. In terms of assembly, homodimer.

The enzyme catalyses Transfers a segment of a (1-&gt;4)-alpha-D-glucan to a new position in an acceptor, which may be glucose or a (1-&gt;4)-alpha-D-glucan.. With respect to regulation, inhibited by p-chloromercuribenzoic acid, monoiodoacetic acid, mercury and nickel ions. In terms of biological role, catalyzes the transglycosylation of maltooligosaccharides, yielding maltooligosaccharides of various lengths and glucose. Maltose and glucose can be used as acceptors in the transfer reaction. In Thermococcus litoralis (strain ATCC 51850 / DSM 5473 / JCM 8560 / NS-C), this protein is 4-alpha-glucanotransferase (jgt).